Consider the following 458-residue polypeptide: tRNA modification GTPase MnmE (458 aa).

Positions 22, 84, and 123 each coordinate (6S)-5-formyl-5,6,7,8-tetrahydrofolate. In terms of domain architecture, TrmE-type G spans 220-379; the sequence is GISTAIIGRP…LEKAIADLFF (160 aa). Asn230 lines the K(+) pocket. GTP-binding positions include 230-235, 249-255, and 274-277; these read NVGKSS, TDIAGTT, and DTAG. A Mg(2+)-binding site is contributed by Ser234. The K(+) site is built by Thr249, Ile251, and Thr254. A Mg(2+)-binding site is contributed by Thr255. Lys458 is a binding site for (6S)-5-formyl-5,6,7,8-tetrahydrofolate.

Belongs to the TRAFAC class TrmE-Era-EngA-EngB-Septin-like GTPase superfamily. TrmE GTPase family. Homodimer. Heterotetramer of two MnmE and two MnmG subunits. The cofactor is K(+).

The protein localises to the cytoplasm. Functionally, exhibits a very high intrinsic GTPase hydrolysis rate. Involved in the addition of a carboxymethylaminomethyl (cmnm) group at the wobble position (U34) of certain tRNAs, forming tRNA-cmnm(5)s(2)U34. The protein is tRNA modification GTPase MnmE of Bacillus mycoides (strain KBAB4) (Bacillus weihenstephanensis).